Reading from the N-terminus, the 322-residue chain is Ribose-phosphate pyrophosphokinase 1 (322 aa).

Residues 39–41 (DGE) and 98–99 (RQ) contribute to the ATP site. Residues histidine 132 and aspartate 173 each coordinate Mg(2+). Residue lysine 196 is part of the active site. D-ribose 5-phosphate is bound by residues arginine 198, aspartate 224, and 228-232 (DTAGT).

Belongs to the ribose-phosphate pyrophosphokinase family. Class I subfamily. In terms of assembly, homohexamer. Mg(2+) serves as cofactor.

It is found in the cytoplasm. It carries out the reaction D-ribose 5-phosphate + ATP = 5-phospho-alpha-D-ribose 1-diphosphate + AMP + H(+). The protein operates within metabolic intermediate biosynthesis; 5-phospho-alpha-D-ribose 1-diphosphate biosynthesis; 5-phospho-alpha-D-ribose 1-diphosphate from D-ribose 5-phosphate (route I): step 1/1. Involved in the biosynthesis of the central metabolite phospho-alpha-D-ribosyl-1-pyrophosphate (PRPP) via the transfer of pyrophosphoryl group from ATP to 1-hydroxyl of ribose-5-phosphate (Rib-5-P). This is Ribose-phosphate pyrophosphokinase 1 from Streptococcus mutans serotype c (strain ATCC 700610 / UA159).